The primary structure comprises 514 residues: MDEGMEISSEGNSLIKAVHQSRLRLTRLLLEGGAYINESNDRGETPLMIACKTKHVDHQSVSKAKMVKYLLENNADPNIQDKSGKTALMHACLEKAGPEVVSLLLKSGADLSLQDHSSYSALVYAINSEDTETLKVLLSACKAKGKEVIIITTAKLPCGKHTTKQYLNMPPVDIDGCHSPATCTTPSEIDIKTASSPLSHSSETELTLFGFKDLELAGSNDDTWDPGSPVRKPALAPKGPKLPHAPPWVKSPPLLMHQNRVASLQEELQDITPEEELSYKTNGLALSKRFITRHQSIDVKDTAHLLRAFDQASSRKMSYDEINCQSYLSEGNQQCIEVPVDQDPDSNQTIFASTLRSIVQKRNLGANHYSSDSQLSAGLTPPTSEDGKALIGKKKILSPSPSQLSESKELLENIPPGPLSRRNHAVLERRGSGAFPLDHSVTQTRQGFLPPLNVNSHPPISDINVNNKICSLLSCGQKVLMPTVPIFPKEFKSKKMLLRRQSLQTEQIKQLVNF.

ANK repeat units follow at residues 9 to 38 (SEGN…YINE), 42 to 79 (RGET…DPNI), 83 to 113 (SGKT…DLSL), and 117 to 146 (SSYS…AKGK). Residues 220 to 249 (NDDTWDPGSPVRKPALAPKGPKLPHAPPWV) are disordered. The residue at position 263 (Ser263) is a Phosphoserine. Thr272 carries the phosphothreonine modification. Residue Ser296 is modified to Phosphoserine.

It belongs to the ANKRD34 family. In terms of processing, phosphorylated.

The protein resides in the cytoplasm. The protein localises to the nucleus. This chain is Ankyrin repeat domain-containing protein 34B (ANKRD34B), found in Homo sapiens (Human).